The following is a 299-amino-acid chain: Nucleotide-binding protein Moth_0258 (299 aa).

Gly-14 to Thr-21 provides a ligand contact to ATP. Position 68 to 71 (Asp-68 to Gly-71) interacts with GTP.

Belongs to the RapZ-like family.

Displays ATPase and GTPase activities. In Moorella thermoacetica (strain ATCC 39073 / JCM 9320), this protein is Nucleotide-binding protein Moth_0258.